The primary structure comprises 375 residues: Chaperone protein DnaJ (375 aa).

Residues 5–69 (DYYEILGIDK…QKRAQYDQFG (65 aa)) form the J domain. The CR-type zinc finger occupies 131 to 213 (GKETDIEIPK…CGGSGTVQKN (83 aa)). Zn(2+) is bound by residues Cys-144, Cys-147, Cys-161, Cys-164, Cys-187, Cys-190, Cys-201, and Cys-204. CXXCXGXG motif repeat units follow at residues 144–151 (CDTCNGSG), 161–168 (CSHCHGSG), 187–194 (CNYCQGTG), and 201–208 (CNTCGGSG).

Belongs to the DnaJ family. Homodimer. The cofactor is Zn(2+).

The protein localises to the cytoplasm. Functionally, participates actively in the response to hyperosmotic and heat shock by preventing the aggregation of stress-denatured proteins and by disaggregating proteins, also in an autonomous, DnaK-independent fashion. Unfolded proteins bind initially to DnaJ; upon interaction with the DnaJ-bound protein, DnaK hydrolyzes its bound ATP, resulting in the formation of a stable complex. GrpE releases ADP from DnaK; ATP binding to DnaK triggers the release of the substrate protein, thus completing the reaction cycle. Several rounds of ATP-dependent interactions between DnaJ, DnaK and GrpE are required for fully efficient folding. Also involved, together with DnaK and GrpE, in the DNA replication of plasmids through activation of initiation proteins. The protein is Chaperone protein DnaJ of Oceanobacillus iheyensis (strain DSM 14371 / CIP 107618 / JCM 11309 / KCTC 3954 / HTE831).